The following is a 365-amino-acid chain: NADH-quinone oxidoreductase subunit H 2 (365 aa).

8 consecutive transmembrane segments (helical) span residues 1 to 21, 71 to 91, 100 to 120, 136 to 156, 199 to 219, 254 to 274, 301 to 321, and 342 to 362; these read MFVVLFVLTLILLYAVFVVWA, LAPVLIFTAIFAGFATLPFAP, VGVFFMITIVSLDVVGIFLAG, IAQVISYEIPLTLSILAVVLI, FVSWNAFKYPFLLLAYVVFFI, ILFLAEYAMMLLVAFLGVVLF, IAGYAWGLFWLISKGITVVFL, and WKILLPLSLFLVIVSGVWVVW.

It belongs to the complex I subunit 1 family. In terms of assembly, NDH-1 is composed of 14 different subunits. Subunits NuoA, H, J, K, L, M, N constitute the membrane sector of the complex.

Its subcellular location is the cell inner membrane. It catalyses the reaction a quinone + NADH + 5 H(+)(in) = a quinol + NAD(+) + 4 H(+)(out). In terms of biological role, NDH-1 shuttles electrons from NADH, via FMN and iron-sulfur (Fe-S) centers, to quinones in the respiratory chain. The immediate electron acceptor for the enzyme in this species is believed to be ubiquinone. Couples the redox reaction to proton translocation (for every two electrons transferred, four hydrogen ions are translocated across the cytoplasmic membrane), and thus conserves the redox energy in a proton gradient. This subunit may bind ubiquinone. In Cytophaga hutchinsonii (strain ATCC 33406 / DSM 1761 / CIP 103989 / NBRC 15051 / NCIMB 9469 / D465), this protein is NADH-quinone oxidoreductase subunit H 2.